An 831-amino-acid chain; its full sequence is Periplasmic nitrate reductase (831 aa).

The tat-type signal signal peptide spans 1 to 29 (MTVTRRDFVRHQALATAAAAAGVAVPAAA). Residues 41–97 (LVWSKAPCRFCGTGCSVNVATKEGRVVATHGDIKSPVNRGLNCVKGYFLSKVMYGED) enclose the 4Fe-4S Mo/W bis-MGD-type domain. Positions 48, 51, 55, and 83 each coordinate [4Fe-4S] cluster. Mo-bis(molybdopterin guanine dinucleotide) contacts are provided by residues Lys-85, Gln-152, Asn-177, Cys-181, 214–221 (WGSNMAEM), 245–249 (STYEH), 264–266 (QSD), Met-375, Gln-379, Asn-485, 511–512 (SD), Lys-534, Asp-561, and 721–730 (TGRVIEHWHS). Residue Trp-797 coordinates substrate. Mo-bis(molybdopterin guanine dinucleotide) contacts are provided by Asn-805 and Lys-822.

Belongs to the prokaryotic molybdopterin-containing oxidoreductase family. NasA/NapA/NarB subfamily. Component of the periplasmic nitrate reductase NapAB complex composed of NapA and NapB. [4Fe-4S] cluster serves as cofactor. Requires Mo-bis(molybdopterin guanine dinucleotide) as cofactor. Post-translationally, predicted to be exported by the Tat system. The position of the signal peptide cleavage has not been experimentally proven.

It is found in the periplasm. The enzyme catalyses 2 Fe(II)-[cytochrome] + nitrate + 2 H(+) = 2 Fe(III)-[cytochrome] + nitrite + H2O. Functionally, catalytic subunit of the periplasmic nitrate reductase complex NapAB. Receives electrons from NapB and catalyzes the reduction of nitrate to nitrite. The polypeptide is Periplasmic nitrate reductase (Saccharophagus degradans (strain 2-40 / ATCC 43961 / DSM 17024)).